Here is a 57-residue protein sequence, read N- to C-terminus: COP9 signalosome complex subunit 9 (57 aa).

The protein belongs to the CSN9 family. As to quaternary structure, component of the CSN complex, probably composed of cops1, cops2, cops3, cops4, cops5, cops6, cops7, cops8 and cops9.

It is found in the nucleus. Its subcellular location is the cytoplasm. The protein localises to the nucleoplasm. Functionally, component of the COP9 signalosome complex (CSN), a complex involved in various cellular and developmental processes. The CSN complex is an essential regulator of the ubiquitin (Ubl) conjugation pathway by mediating the deneddylation of the cullin subunits of SCF-type E3 ligase complexes, leading to decrease the Ubl ligase activity. May play a role in cell proliferation. This chain is COP9 signalosome complex subunit 9, found in Xenopus tropicalis (Western clawed frog).